The primary structure comprises 501 residues: Cytochrome P450 3A31 (501 aa).

Position 440 (C440) interacts with heme.

Belongs to the cytochrome P450 family. It depends on heme as a cofactor. As to expression, expressed constitutively in liver.

The protein localises to the endoplasmic reticulum membrane. It localises to the microsome membrane. The catalysed reaction is an organic molecule + reduced [NADPH--hemoprotein reductase] + O2 = an alcohol + oxidized [NADPH--hemoprotein reductase] + H2O + H(+). Functionally, cytochromes P450 are a group of heme-thiolate monooxygenases. In liver microsomes, this enzyme is involved in an NADPH-dependent electron transport pathway. It oxidizes a variety of structurally unrelated compounds, including steroids, fatty acids, and xenobiotics. The sequence is that of Cytochrome P450 3A31 (CYP3A31) from Mesocricetus auratus (Golden hamster).